A 286-amino-acid polypeptide reads, in one-letter code: Shikimate dehydrogenase (NADP(+)) (286 aa).

Shikimate-binding positions include 20-22 (SLS) and Thr67. Residue Lys71 is the Proton acceptor of the active site. Residues Asn92 and Asp107 each contribute to the shikimate site. NADP(+) is bound by residues 132-136 (GAGGA) and Met228. Residue Tyr230 participates in shikimate binding. Gly251 contributes to the NADP(+) binding site.

Belongs to the shikimate dehydrogenase family. Homodimer.

It catalyses the reaction shikimate + NADP(+) = 3-dehydroshikimate + NADPH + H(+). It participates in metabolic intermediate biosynthesis; chorismate biosynthesis; chorismate from D-erythrose 4-phosphate and phosphoenolpyruvate: step 4/7. Its function is as follows. Involved in the biosynthesis of the chorismate, which leads to the biosynthesis of aromatic amino acids. Catalyzes the reversible NADPH linked reduction of 3-dehydroshikimate (DHSA) to yield shikimate (SA). This chain is Shikimate dehydrogenase (NADP(+)), found in Geobacter metallireducens (strain ATCC 53774 / DSM 7210 / GS-15).